A 108-amino-acid chain; its full sequence is Ig kappa chain V region K-25 (108 aa).

Residues 1–23 (AVELTQTPASVEAAVGGTVTIKC) form a framework-1 region. Residues 24–34 (QASQBIYSYLS) are complementarity-determining-1. A framework-2 region spans residues 35–49 (WYQQKPGQPPKLLIY). Positions 50 to 56 (KASTLAS) are complementarity-determining-2. A framework-3 region spans residues 57 to 88 (GVSSRFKGSGSGTEFTLTISDLZCADAATYYC). The tract at residues 89 to 97 (QTYSYSSTY) is complementarity-determining-3. The interval 98–107 (FGGGTEVVVK) is framework-4.

The polypeptide is Ig kappa chain V region K-25 (Oryctolagus cuniculus (Rabbit)).